A 474-amino-acid chain; its full sequence is Glutamate--tRNA ligase (474 aa).

A 'HIGH' region motif is present at residues 10–20 (PSPTGYLHIGG). Zn(2+)-binding residues include Cys107, Cys109, Cys134, and Asp136. Positions 244-248 (RLSKR) match the 'KMSKS' region motif. Lys247 is a binding site for ATP.

This sequence belongs to the class-I aminoacyl-tRNA synthetase family. Glutamate--tRNA ligase type 1 subfamily. As to quaternary structure, monomer. It depends on Zn(2+) as a cofactor.

The protein localises to the cytoplasm. It carries out the reaction tRNA(Glu) + L-glutamate + ATP = L-glutamyl-tRNA(Glu) + AMP + diphosphate. Catalyzes the attachment of glutamate to tRNA(Glu) in a two-step reaction: glutamate is first activated by ATP to form Glu-AMP and then transferred to the acceptor end of tRNA(Glu). The sequence is that of Glutamate--tRNA ligase from Anaeromyxobacter sp. (strain K).